The primary structure comprises 344 residues: Replication-associated protein G2P (344 aa).

This sequence belongs to the inovirus G2P protein family.

It catalyses the reaction ATP + (deoxyribonucleotide)n-3'-hydroxyl + 5'-phospho-(deoxyribonucleotide)m = (deoxyribonucleotide)n+m + AMP + diphosphate.. Isoform G2P plays an essential role in viral DNA replication. Binds the origin of replication and cleaves the dsDNA replicative form I (RFI) and becomes covalently bound to it via phosphotyrosine bond, generating the dsDNA replicative form II (RFII). In turn, viral DNA replication initiates at the 3'-OH of the cleavage site. After one round of rolling circle synthesis, protein G2P is linked to the newly synthesized ssDNA and joins the ends of the displaced strand to generate a circular single-stranded molecule ready to be packed into a virion. Functionally, isoform G10P protein binds to double-stranded DNA and prevents hydrolysis by nucleases. Additionally, G10P is an inhibitor of DNA replication and may have a role in the transition from semiconservative replicative form DNA replication to single-stranded DNA synthesis in the life cycle. In Enterobacteria phage I2-2 (Bacteriophage I2-2), this protein is Replication-associated protein G2P (II).